A 132-amino-acid polypeptide reads, in one-letter code: Fatty acid-binding protein, adipocyte (132 aa).

N-acetylcysteine is present on C2. At S13 the chain carries Phosphoserine. Phosphotyrosine; by Tyr-kinases is present on Y20. A Nuclear localization signal motif is present at residues 22–32 (KEVGVGFATRK). 127–129 (RVY) is a binding site for a fatty acid.

This sequence belongs to the calycin superfamily. Fatty-acid binding protein (FABP) family. Monomer. Homodimer. Interacts with PPARG.

Its subcellular location is the cytoplasm. The protein localises to the nucleus. Its function is as follows. Lipid transport protein in adipocytes. Binds both long chain fatty acids and retinoic acid. Delivers long-chain fatty acids and retinoic acid to their cognate receptors in the nucleus. The sequence is that of Fatty acid-binding protein, adipocyte (FABP4) from Cervus elaphus (Red deer).